The sequence spans 511 residues: Coatomer subunit delta (511 aa).

Residues 168-177 (QARRDAERQG) show a composition bias toward basic and acidic residues. Residues 168–188 (QARRDAERQGKKAPGFGGFGS) are disordered. Position 223 is a phosphoserine (Ser223). N6-acetyllysine is present on residues Lys233 and Lys241. Phosphoserine is present on Ser244. The MHD domain maps to 271 to 511 (MESVHMKIEE…TFLVDKYEIL (241 aa)). An N6-acetyllysine mark is found at Lys309 and Lys351. Ser493 carries the post-translational modification Phosphoserine.

This sequence belongs to the adaptor complexes medium subunit family. Delta-COP subfamily. As to quaternary structure, oligomeric complex that consists of at least the alpha, beta, beta', gamma, delta, epsilon and zeta subunits. In terms of tissue distribution, ubiquitously expressed.

It localises to the cytoplasm. The protein localises to the golgi apparatus membrane. The protein resides in the cytoplasmic vesicle. Its subcellular location is the COPI-coated vesicle membrane. Its function is as follows. Component of the coatomer, a cytosolic protein complex that binds to dilysine motifs and reversibly associates with Golgi non-clathrin-coated vesicles, which further mediate biosynthetic protein transport from the ER, via the Golgi up to the trans Golgi network. The coatomer complex is required for budding from Golgi membranes, and is essential for the retrograde Golgi-to-ER transport of dilysine-tagged proteins. In mammals, the coatomer can only be recruited by membranes associated to ADP-ribosylation factors (ARFs), which are small GTP-binding proteins; the complex also influences the Golgi structural integrity, as well as the processing, activity, and endocytic recycling of LDL receptors. The sequence is that of Coatomer subunit delta (ARCN1) from Homo sapiens (Human).